Reading from the N-terminus, the 619-residue chain is Chaperone protein HscA homolog (619 aa).

It belongs to the heat shock protein 70 family.

Chaperone involved in the maturation of iron-sulfur cluster-containing proteins. Has a low intrinsic ATPase activity which is markedly stimulated by HscB. The polypeptide is Chaperone protein HscA homolog (Shewanella frigidimarina (strain NCIMB 400)).